A 492-amino-acid chain; its full sequence is Nuclear hormone receptor family member nhr-4 (492 aa).

The segment at residues R47–N122 is a DNA-binding region (nuclear receptor). NR C4-type zinc fingers lie at residues C50 to C70 and C86 to C110. The disordered stretch occupies residues Q121–S143. The NR LBD domain maps to M215–T481.

Belongs to the nuclear hormone receptor family.

The protein resides in the nucleus. Functionally, orphan nuclear receptor. The chain is Nuclear hormone receptor family member nhr-4 (nhr-4) from Caenorhabditis elegans.